Here is a 356-residue protein sequence, read N- to C-terminus: Heat-inducible transcription repressor HrcA (356 aa).

This sequence belongs to the HrcA family.

Negative regulator of class I heat shock genes (grpE-dnaK-dnaJ and groELS operons). Prevents heat-shock induction of these operons. This Bartonella tribocorum (strain CIP 105476 / IBS 506) protein is Heat-inducible transcription repressor HrcA.